A 397-amino-acid polypeptide reads, in one-letter code: Chorismate synthase (397 aa).

Arg-40 and Arg-46 together coordinate NADP(+). FMN-binding positions include 129–131 (RSS), 257–258 (QA), Gly-302, 317–321 (KPISS), and Arg-343.

The protein belongs to the chorismate synthase family. As to quaternary structure, homotetramer. FMNH2 serves as cofactor.

It carries out the reaction 5-O-(1-carboxyvinyl)-3-phosphoshikimate = chorismate + phosphate. It functions in the pathway metabolic intermediate biosynthesis; chorismate biosynthesis; chorismate from D-erythrose 4-phosphate and phosphoenolpyruvate: step 7/7. Its function is as follows. Catalyzes the anti-1,4-elimination of the C-3 phosphate and the C-6 proR hydrogen from 5-enolpyruvylshikimate-3-phosphate (EPSP) to yield chorismate, which is the branch point compound that serves as the starting substrate for the three terminal pathways of aromatic amino acid biosynthesis. This reaction introduces a second double bond into the aromatic ring system. The protein is Chorismate synthase of Chlorobium phaeobacteroides (strain DSM 266 / SMG 266 / 2430).